The primary structure comprises 173 residues: Large ribosomal subunit protein bL9 (173 aa).

Residues 151–173 (YDDTPDRTETEESTKELQEEHAE) form a disordered region.

The protein belongs to the bacterial ribosomal protein bL9 family.

Functionally, binds to the 23S rRNA. This chain is Large ribosomal subunit protein bL9, found in Lawsonia intracellularis (strain PHE/MN1-00).